A 340-amino-acid chain; its full sequence is Putative RRN3-like protein RRN3P2 (340 aa).

This sequence belongs to the RRN3 family.

The sequence is that of Putative RRN3-like protein RRN3P2 (RRN3P2) from Homo sapiens (Human).